The sequence spans 391 residues: Nucleosome assembly protein 1-like 1 (391 aa).

Methionine 1 is modified (N-acetylmethionine). Positions methionine 1–serine 10 are enriched in basic and acidic residues. The segment at methionine 1–lysine 32 is disordered. Alanine 2 carries the N-acetylalanine modification. Serine 10 is modified (phosphoserine). The span at glutamate 11 to glycine 28 shows a compositional bias: acidic residues. Phosphothreonine is present on residues threonine 62 and threonine 64. The residue at position 69 (serine 69) is a Phosphoserine. An N6-acetyllysine modification is found at lysine 116. The NAP1L motif motif lies at tyrosine 125–alanine 150. Residues cysteine 132–serine 143 are compositionally biased toward acidic residues. The interval cysteine 132–aspartate 163 is disordered. At serine 143 the chain carries Phosphoserine. A compositionally biased stretch (basic and acidic residues) spans glutamate 144 to aspartate 163. Residues isoleucine 273 to histidine 279 carry the Nuclear localization signal motif. A compositionally biased stretch (acidic residues) spans alanine 346–aspartate 376. Residues alanine 346–glutamine 391 form a disordered region. The span at tyrosine 377–glutamine 391 shows a compositional bias: basic and acidic residues. At cysteine 388 the chain carries Cysteine methyl ester. Cysteine 388 carries the S-farnesyl cysteine lipid modification. A propeptide spans lysine 389 to glutamine 391 (removed in mature form).

The protein belongs to the nucleosome assembly protein (NAP) family. Homodimer. The dimer binds strongly and sequentially to single and double H2A-H2B heterodimers. Interacts with ERCC6; this interaction increases ERCC6 processivity. Interacts with RAD54. Interacts with SETD1A. In terms of assembly, (Microbial infection) Interacts with human herpesvirus 8 protein LANA1 (via N-terminus); this interaction is required for LANA1-dependent DNA replication. As to quaternary structure, (Microbial infection) Interacts with hepatitis virus protein NS5A (via C-terminus); this interaction sequesters NAP1L1 in the cytoplasm, blocking its nuclear translocation. (Microbial infection) Interacts with Chikungunya virus non-structural protein 3 (via C-terminus). In terms of processing, monoglycylated on glutamate residues. Cannot be polyglycylated due to the absence of functional TTLL10 in human. Polyglutamylated by TTLL4 on glutamate residues, resulting in polyglutamate chains on the gamma-carboxyl group. Both polyglutamylation and monoglycylation modifications can coexist on the same protein on adjacent residues, and lowering polyglycylation levels increases polyglutamylation, and reciprocally. As to expression, ubiquitously expressed.

Its subcellular location is the nucleus. It is found in the melanosome. It localises to the cytoplasm. Its function is as follows. Histone chaperone that plays a role in the nuclear import of H2A-H2B and nucleosome assembly. Also participates in several important DNA repair mechanisms: greatly enhances ERCC6-mediated chromatin remodeling which is essential for transcription-coupled nucleotide excision DNA repair. Also stimulates homologous recombination (HR) by RAD51 and RAD54 which is essential in mitotic DNA double strand break (DSB) repair. Plays a key role in the regulation of embryonic neurogenesis. Promotes the proliferation of neural progenitors and inhibits neuronal differentiation during cortical development. Regulates neurogenesis via the modulation of RASSF10; regulates RASSF10 expression by promoting SETD1A-mediated H3K4 methylation at the RASSF10 promoter. In terms of biological role, (Microbial infection) Positively regulates Epstein-Barr virus reactivation in epithelial cells through the induction of viral BZLF1 expression. (Microbial infection) Together with human herpesvirus 8 protein LANA1, assists the proper assembly of the nucleosome on the replicated viral DNA. This Homo sapiens (Human) protein is Nucleosome assembly protein 1-like 1 (NAP1L1).